The sequence spans 160 residues: Cytochrome b6-f complex subunit 4 (160 aa).

3 helical membrane-spanning segments follow: residues 36-56, 95-115, and 131-151; these read LLYI…GLAV, LLGV…PFIE, and ILFL…TFPI.

Belongs to the cytochrome b family. PetD subfamily. In terms of assembly, the 4 large subunits of the cytochrome b6-f complex are cytochrome b6, subunit IV (17 kDa polypeptide, petD), cytochrome f and the Rieske protein, while the 4 small subunits are petG, petL, petM and petN. The complex functions as a dimer.

It is found in the plastid. It localises to the chloroplast thylakoid membrane. In terms of biological role, component of the cytochrome b6-f complex, which mediates electron transfer between photosystem II (PSII) and photosystem I (PSI), cyclic electron flow around PSI, and state transitions. The protein is Cytochrome b6-f complex subunit 4 of Chlamydomonas moewusii (Chlamydomonas eugametos).